The chain runs to 145 residues: U20-hexatoxin-Hi1a (145 aa).

An N-terminal signal peptide occupies residues 1-16 (MYQFLIIVILAAFVNG). 2 Thyroglobulin type-1 domains span residues 20-73 (KTEC…GQPM) and 82-145 (ACEC…RLEC). Disulfide bonds link Cys-23/Cys-45, Cys-56/Cys-63, Cys-85/Cys-106, Cys-117/Cys-124, and Cys-126/Cys-145.

As to expression, expressed by the venom gland.

The protein localises to the secreted. Its function is as follows. Cysteine proteinase inhibitor. The chain is U20-hexatoxin-Hi1a from Hadronyche infensa (Fraser island funnel-web spider).